The primary structure comprises 83 residues: Large ribosomal subunit protein eL31 (83 aa).

Belongs to the eukaryotic ribosomal protein eL31 family.

The protein is Large ribosomal subunit protein eL31 of Methanococcus vannielii (strain ATCC 35089 / DSM 1224 / JCM 13029 / OCM 148 / SB).